The primary structure comprises 481 residues: 3-isopropylmalate dehydratase large subunit (481 aa).

Residues Cys-357, Cys-417, and Cys-420 each coordinate [4Fe-4S] cluster.

Belongs to the aconitase/IPM isomerase family. LeuC type 1 subfamily. In terms of assembly, heterodimer of LeuC and LeuD. Requires [4Fe-4S] cluster as cofactor.

It carries out the reaction (2R,3S)-3-isopropylmalate = (2S)-2-isopropylmalate. It participates in amino-acid biosynthesis; L-leucine biosynthesis; L-leucine from 3-methyl-2-oxobutanoate: step 2/4. Functionally, catalyzes the isomerization between 2-isopropylmalate and 3-isopropylmalate, via the formation of 2-isopropylmaleate. In Maricaulis maris (strain MCS10) (Caulobacter maris), this protein is 3-isopropylmalate dehydratase large subunit.